The sequence spans 156 residues: Ribosomal RNA large subunit methyltransferase H (156 aa).

S-adenosyl-L-methionine-binding positions include L73, G104, and 123–128 (LSSLTL).

The protein belongs to the RNA methyltransferase RlmH family. As to quaternary structure, homodimer.

Its subcellular location is the cytoplasm. It carries out the reaction pseudouridine(1915) in 23S rRNA + S-adenosyl-L-methionine = N(3)-methylpseudouridine(1915) in 23S rRNA + S-adenosyl-L-homocysteine + H(+). Its function is as follows. Specifically methylates the pseudouridine at position 1915 (m3Psi1915) in 23S rRNA. This Bordetella bronchiseptica (strain ATCC BAA-588 / NCTC 13252 / RB50) (Alcaligenes bronchisepticus) protein is Ribosomal RNA large subunit methyltransferase H.